A 344-amino-acid chain; its full sequence is uncharacterized protein (344 aa).

5 helical membrane passes run 53-73, 84-104, 153-173, 189-209, and 275-295; these read FVVG…VSVW, WPIL…GYNI, IYPL…LYLL, FGAW…LEML, and IASE…VGVF.

It belongs to the steroid 5-alpha reductase family.

It is found in the endoplasmic reticulum membrane. This is an uncharacterized protein from Schizosaccharomyces pombe (strain 972 / ATCC 24843) (Fission yeast).